The following is a 464-amino-acid chain: Cyclin-dependent kinase 8 (464 aa).

An interaction with CCNC region spans residues 1–15; sequence MDYDFKVKLSSERER. The Protein kinase domain maps to 21-335; the sequence is EYEGCKVGRG…SEQAMQDPYF (315 aa). ATP-binding positions include 27–35 and K52; that span reads VGRGTYGHV. D151 acts as the Proton acceptor in catalysis. The disordered stretch occupies residues 358 to 464; the sequence is FLTEEEPDEK…PQYSHQTHRY (107 aa). The segment covering 373 to 391 has biased composition (low complexity); sequence QQQQQGNNHTNGTGHPGNQ. 2 stretches are compositionally biased toward polar residues: residues 409-426 and 436-464; these read PTTT…QRSN and PSTS…THRY.

The protein belongs to the protein kinase superfamily. CMGC Ser/Thr protein kinase family. CDC2/CDKX subfamily. In terms of assembly, component of the Mediator complex, which is composed of MED1, MED4, MED6, MED7, MED8, MED9, MED10, MED11, MED12, MED13, MED13L, MED14, MED15, MED16, MED17, MED18, MED19, MED20, MED21, MED22, MED23, MED24, MED25, MED26, MED27, MED29, MED30, MED31, CCNC, CDK8 and CDC2L6/CDK11. The MED12, MED13, CCNC and CDK8 subunits form a distinct module termed the CDK8 module. Mediator containing the CDK8 module is less active than Mediator lacking this module in supporting transcriptional activation. Individual preparations of the Mediator complex lacking one or more distinct subunits have been variously termed ARC, CRSP, DRIP, PC2, SMCC and TRAP. The cylin/CDK pair formed by CCNC/CDK8 also associates with the large subunit of RNA polymerase II. Interacts with CTNNB1, GLI3 and MAML1. It depends on Mg(2+) as a cofactor.

It localises to the nucleus. The catalysed reaction is L-seryl-[protein] + ATP = O-phospho-L-seryl-[protein] + ADP + H(+). It catalyses the reaction L-threonyl-[protein] + ATP = O-phospho-L-threonyl-[protein] + ADP + H(+). The enzyme catalyses [DNA-directed RNA polymerase] + ATP = phospho-[DNA-directed RNA polymerase] + ADP + H(+). Functionally, component of the Mediator complex, a coactivator involved in regulated gene transcription of nearly all RNA polymerase II-dependent genes. Mediator functions as a bridge to convey information from gene-specific regulatory proteins to the basal RNA polymerase II transcription machinery. Mediator is recruited to promoters by direct interactions with regulatory proteins and serves as a scaffold for the assembly of a functional pre-initiation complex with RNA polymerase II and the general transcription factors. Phosphorylates the CTD (C-terminal domain) of the large subunit of RNA polymerase II (RNAp II), which may inhibit the formation of a transcription initiation complex. Phosphorylates CCNH leading to down-regulation of the TFIIH complex and transcriptional repression. Recruited through interaction with MAML1 to hyperphosphorylate the intracellular domain of NOTCH, leading to its degradation. This chain is Cyclin-dependent kinase 8 (Cdk8), found in Mus musculus (Mouse).